We begin with the raw amino-acid sequence, 368 residues long: Mitogen-activated protein kinase KSS1 (368 aa).

A Protein kinase domain is found at 13–313 (YKLVDLIGEG…AAEALRHPYL (301 aa)). ATP is bound by residues 19–27 (IGEGAYGTV) and Lys-42. Asp-143 functions as the Proton acceptor in the catalytic mechanism. Phosphothreonine is present on Thr-183. The short motif at 183 to 185 (TEY) is the TXY element. A Phosphotyrosine modification is found at Tyr-185.

It belongs to the protein kinase superfamily. Ser/Thr protein kinase family. MAP kinase subfamily. HOG1 sub-subfamily. In terms of assembly, in the nucleus, KSS1 forms a complex with DIG1, DIG2 and STE12; in contrast to FUS3 the interaction of KSS1 with STE12 does not depend on DIG1 and DIG2. Phosphorylated KSS1 shows reduced interaction with STE12. During pheromone activation and phosphorylation, KSS1 forms a membrane-associated complex with the scaffold protein STE5, the MAPKK STE7, the MAPKKK STE11, and the G-protein beta subunit GBB/STE4; interacting directly with POF1, STE7 and STE5 proteins. Mg(2+) is required as a cofactor. In terms of processing, dually phosphorylated on Thr-183 and Tyr-185 by STE7 in response to pheromone or carbon/nitrogen limitation, which activates the enzyme. Activated FUS3 down-regulates KSS1 phosphorylation.

The protein resides in the nucleus. It is found in the cytoplasm. The protein localises to the periplasm. It carries out the reaction L-seryl-[protein] + ATP = O-phospho-L-seryl-[protein] + ADP + H(+). The catalysed reaction is L-threonyl-[protein] + ATP = O-phospho-L-threonyl-[protein] + ADP + H(+). Its activity is regulated as follows. Activated by tyrosine and threonine phosphorylation after pheromone treatment or carbon/nitrogen limitation. In terms of biological role, together with closely related FUS3, KSS1 is the final kinase in the signal transduction cascade regulating activation/repression of the mating and filamentation pathways, induced by pheromone and nitrogen/carbon limitation, respectively. Phosphorylated KSS1 activates both pathways, whereas activated FUS3 activates the mating but suppresses the filamentation pathway. KSS1 activity is down-regulated by FUS3 during pheromone induction to prevent inappropriate activation of the filamentation pathway. During induction of filamentation, KSS1 activates the transcription factor STE12 resulting in its binding to and activation of filamentation specific genes. Non-activated KSS1 has a kinase-independent repressive effect on STE12 transcriptional activity, that is mediated by direct binding to STE12 and depends on the presence of DIG1 and DIG2, and that is required for the suppression of filamentation under normal growth conditions. SSN3/SRB10 contributes further to the suppression of filamentation under these conditions by reducing STE12 stability independent of KSS1. FUS3 can partially compensate for the lack of KSS1 but filamentation becomes constitutively induced at a low level in the absence of any signal. KSS1 phosphorylates STE7, STE5, FAR1, DIG1, DIG2, STE12, and SST2. This chain is Mitogen-activated protein kinase KSS1 (KSS1), found in Saccharomyces cerevisiae (strain ATCC 204508 / S288c) (Baker's yeast).